The primary structure comprises 491 residues: MNTQQLAKLRSIVPEMRRVRHIHFVGIGGAGMGGIAEVLANEGYQISGSDLAPNPVTQQLLNLGATIYFNHRPENVRDASVVVVSSAISADNPEIVAAHEARIPVIRRAEMLAELMRFRHGIAIAGTHGKTTTTAMVSSIYAEAGLDPTFVNGGLVKAAGVHARLGHGRYLIAEADESDASFLHLQPMVAIVTNIEADHMDTYQGDFENLKQTFINFLHNLPFYGRAVMCVDDPVIRELLPRVGRQTTTYGFSEDADVRVEDYQQIGPQGHFTLLRQDKEPMCVTLNAPGRHNALNAAAAVAVATEEGIDDEAILRALESFQGTGRRFDFLGEFPLEPVNGKSGTAMLVDDYGHHPTEVDATIKAARAGWPDKNLVMLFQPHRFTRTRDLYDDFANVLTQVDTLLMLEVYPAGEAPIPGADSRSLCRTIRGRGKIDPILVPDPAQVAEMLAPVLTGNDLILVQGAGNIGKIARSLAEIKLKPQTPEEEQHD.

An ATP-binding site is contributed by Gly-126–Thr-132.

This sequence belongs to the MurCDEF family.

It is found in the cytoplasm. The catalysed reaction is UDP-N-acetyl-alpha-D-muramate + L-alanine + ATP = UDP-N-acetyl-alpha-D-muramoyl-L-alanine + ADP + phosphate + H(+). The protein operates within cell wall biogenesis; peptidoglycan biosynthesis. In terms of biological role, cell wall formation. The protein is UDP-N-acetylmuramate--L-alanine ligase of Shigella flexneri.